Consider the following 32-residue polypeptide: Cyclotide Hyfl-B (32 aa).

Residues 1–32 (GSPIQCAETCFIGKCYTEELGCTCTAFLCMKN) constitute a cross-link (cyclopeptide (Gly-Asn)). Cystine bridges form between cysteine 6–cysteine 22, cysteine 10–cysteine 24, and cysteine 15–cysteine 29.

It belongs to the cyclotide family. Moebius subfamily. Post-translationally, this is a cyclic peptide.

Its function is as follows. Probably participates in a plant defense mechanism. The chain is Cyclotide Hyfl-B from Hybanthus floribundus (Greenviolet).